We begin with the raw amino-acid sequence, 275 residues long: 4-hydroxy-tetrahydrodipicolinate reductase (275 aa).

Residue 12–17 coordinates NAD(+); the sequence is GAAGRM. R39 contributes to the NADP(+) binding site. NAD(+)-binding positions include 102–104 and 126–129; these read GTT and SGNM. The active-site Proton donor/acceptor is the H160. H161 contacts (S)-2,3,4,5-tetrahydrodipicolinate. The Proton donor role is filled by K164. Position 170-171 (170-171) interacts with (S)-2,3,4,5-tetrahydrodipicolinate; the sequence is GT.

This sequence belongs to the DapB family.

The protein localises to the cytoplasm. It catalyses the reaction (S)-2,3,4,5-tetrahydrodipicolinate + NAD(+) + H2O = (2S,4S)-4-hydroxy-2,3,4,5-tetrahydrodipicolinate + NADH + H(+). It carries out the reaction (S)-2,3,4,5-tetrahydrodipicolinate + NADP(+) + H2O = (2S,4S)-4-hydroxy-2,3,4,5-tetrahydrodipicolinate + NADPH + H(+). Its pathway is amino-acid biosynthesis; L-lysine biosynthesis via DAP pathway; (S)-tetrahydrodipicolinate from L-aspartate: step 4/4. Catalyzes the conversion of 4-hydroxy-tetrahydrodipicolinate (HTPA) to tetrahydrodipicolinate. This is 4-hydroxy-tetrahydrodipicolinate reductase from Agrobacterium fabrum (strain C58 / ATCC 33970) (Agrobacterium tumefaciens (strain C58)).